We begin with the raw amino-acid sequence, 177 residues long: Endoribonuclease YbeY (177 aa).

The Zn(2+) site is built by His-114, His-118, and His-124. Residues 154–177 (SYPEAIPTNPAPRRQASSSAGHIE) form a disordered region. A compositionally biased stretch (polar residues) spans 168–177 (QASSSAGHIE).

The protein belongs to the endoribonuclease YbeY family. The cofactor is Zn(2+).

It is found in the cytoplasm. In terms of biological role, single strand-specific metallo-endoribonuclease involved in late-stage 70S ribosome quality control and in maturation of the 3' terminus of the 16S rRNA. The sequence is that of Endoribonuclease YbeY from Cellvibrio japonicus (strain Ueda107) (Pseudomonas fluorescens subsp. cellulosa).